Reading from the N-terminus, the 2145-residue chain is Adenylate cyclase (2145 aa).

Disordered regions lie at residues 1-115 (MPRN…RMSD), 127-236 (DPAG…SGAR), 266-307 (GKEH…PVPK), and 329-547 (VRDI…GPTD). Composition is skewed to low complexity over residues 7–23 (SSRFSSMTGSSTDSARS), 35–68 (PSASSSSPFAASSNQTSNASRSASHGSRRAAPSR), and 89–107 (SPTSTSPCVSPSSITSSNS). 2 stretches are compositionally biased toward polar residues: residues 134–148 (SRTQQNNPSSGSLSQ) and 159–205 (PASS…TESP). Over residues 217 to 234 (SIASITTTASSQGSRASG) the composition is skewed to low complexity. Residues 269–281 (HRSHSYSHARPHR) show a composition bias toward basic residues. Residues 343 to 357 (NDSSQQNNPPKTSGS) show a composition bias toward polar residues. Over residues 377-403 (KSNEDPRSLRPTVSREDSTISVPKDRN) the composition is skewed to basic and acidic residues. The span at 404 to 441 (GSSTMYGTRSRAQSPAPSTTGSYWGHKSGSTDGQTSPG) shows a compositional bias: polar residues. Composition is skewed to basic and acidic residues over residues 454 to 466 (RLKEKDDAPDLKK) and 495 to 511 (ADGKYQPDVRDGIRPDL). A Ras-associating domain is found at 637-727 (HNYCIRVFRA…IEDIGREDNS (91 aa)). 15 LRR repeats span residues 779–800 (EIISLNLSRNLSLQVPRDFISV), 803–824 (NLRDIKFNNNEARALPKSFGYA), 826–847 (RLTMLDASNNRLESLESAALHN), 850–871 (GLLKLNLANNKLKQLPREFEAF), 873–894 (VLRTLNISSNLLNNFPPFLAKL), 896–917 (NLVDLDLSFNTIQSLPDNVGQM), 919–941 (SLERLVITNNELSGSLPPSFKNL), 943–964 (SLRELDIKYNAISNIDVISQLP), 965–986 (KLEILSATRNNISQFSGTFERV), 987–1006 (RSIKLNWNPITKFEIKAPVP), 1007–1028 (TLKALNLSNAQLASIDESFHNM), 1030–1051 (NLERLELDKNYFVSLPAHIGNL), 1053–1074 (RLEYFSIAHNSVGELPPEIGCL), 1076–1097 (ELKRLDVRGNNIRKLPMELWWA), and 1099–1120 (KLDYLNASSNVLENFPKPASRA). The segment at 1114 to 1226 (PKPASRAPHP…SSRKDSSHTQ (113 aa)) is disordered. Low complexity-rich tracts occupy residues 1160-1179 (RPSQASSSLLSVGPSPVPGG) and 1201-1217 (SRSTTQSSTALATPTAS). 6 LRR repeats span residues 1235–1255 (SLRYLYMADNQLDDDCFDQLC), 1259–1280 (NLRVLNLSYNDLSDMPQRSIKS), 1283–1304 (QLVELYLSGNELASLPADDLEE), 1307–1328 (MLQTLHINGNKFTNLPADISRA), 1330–1352 (KLTVFDCGSNSLKYNIANVPYDW), and 1359–1380 (NLRYLNLSGNRRLEIKQSSVPT). The PPM-type phosphatase domain maps to 1432 to 1709 (PYGMADTLGS…NKMTVQMLGV (278 aa)). The disordered stretch occupies residues 1718–1760 (RSRQHKGQSMPVYASLQDDGGSSTGMRRARKARDGPLDSTLGR). Residues 1773–1910 (AIVFTDIKNS…PMVNKASRIS (138 aa)) enclose the Guanylate cyclase domain. Asp1778 and Asp1821 together coordinate Mg(2+).

This sequence belongs to the adenylyl cyclase class-3 family. Mg(2+) serves as cofactor.

The catalysed reaction is ATP = 3',5'-cyclic AMP + diphosphate. Plays essential roles in regulation of cellular metabolism by catalyzing the synthesis of a second messenger, cAMP. This is Adenylate cyclase from Podospora anserina (Pleurage anserina).